Here is a 245-residue protein sequence, read N- to C-terminus: Uridylate kinase (245 aa).

Residue 12 to 15 (KLSG) coordinates ATP. Positions 20-25 (GEKGVG) are involved in allosteric activation by GTP. A UMP-binding site is contributed by Gly-54. ATP is bound by residues Gly-55 and Arg-59. UMP is bound by residues Asp-74 and 135-142 (VGSPYFST). ATP is bound by residues Asn-163, Tyr-169, and Asp-172.

This sequence belongs to the UMP kinase family. Homohexamer.

The protein localises to the cytoplasm. The enzyme catalyses UMP + ATP = UDP + ADP. It participates in pyrimidine metabolism; CTP biosynthesis via de novo pathway; UDP from UMP (UMPK route): step 1/1. Allosterically activated by GTP. Inhibited by UTP. Catalyzes the reversible phosphorylation of UMP to UDP. The sequence is that of Uridylate kinase from Streptococcus mutans serotype c (strain ATCC 700610 / UA159).